The chain runs to 425 residues: uncharacterized protein (425 aa).

Positions 1-57 (MKDKPLKLTVEKLVYGGYGFSRLNGKAVFVRFASPKELVEAKVVKEKKDYTEAVVTK) constitute a TRAM domain. 4 residues coordinate [4Fe-4S] cluster: Cys-70, Cys-76, Cys-79, and Cys-153. The S-adenosyl-L-methionine site is built by Gln-260, Asp-308, and Asp-354. The Nucleophile role is filled by Cys-381.

The protein belongs to the class I-like SAM-binding methyltransferase superfamily. RNA M5U methyltransferase family.

This is an uncharacterized protein from Aquifex aeolicus (strain VF5).